We begin with the raw amino-acid sequence, 124 residues long: Small ribosomal subunit protein bS6 (124 aa).

The segment at 99 to 124 (PLPAPRVMPGSEAAQQQQAEAAASAD) is disordered. The segment covering 109–124 (SEAAQQQQAEAAASAD) has biased composition (low complexity).

This sequence belongs to the bacterial ribosomal protein bS6 family.

Binds together with bS18 to 16S ribosomal RNA. In Synechococcus sp. (strain CC9605), this protein is Small ribosomal subunit protein bS6.